A 281-amino-acid polypeptide reads, in one-letter code: Microtubule-associated protein RP/EB family member 3 (281 aa).

Residues 14-116 (NLSRHDMLAW…FIQWFKKFFD (103 aa)) enclose the Calponin-homology (CH) domain. Positions 157–181 (VPQRTSPTGPKNMQTSGRLSNVAPP) are disordered. A compositionally biased stretch (polar residues) spans 158 to 175 (PQRTSPTGPKNMQTSGRL). A phosphoserine mark is found at Ser-162 and Ser-176. Residues 194 to 264 (GGHETDAQIL…LYATEEGFAP (71 aa)) enclose the EB1 C-terminal domain. Residues 217–260 (DGLEKERDFYFSKLRDIELICQEHESENSPVISGIIGILYATEE) are APC-binding. The interval 217 to 281 (DGLEKERDFY…EHQQEDQDEY (65 aa)) is DCTN1-binding. The tract at residues 261 to 281 (GFAPPEDDEIEEHQQEDQDEY) is disordered. Residues 272-281 (EHQQEDQDEY) are compositionally biased toward basic and acidic residues.

This sequence belongs to the MAPRE family. As to quaternary structure, homodimer. Heterodimer with MAPRE1. Binds monomeric and polymerized GTP-bound tubulin. Interacts with APC2. Interacts with DCTN1 and SRCIN1. Binds to the C-terminal domain of APC. Interacts (via C-terminus) with CLIP1. Interacts with SLAIN2 and SLAIN1. Interacts with AKAP9. Interacts with PDE4DIP. Interacts with PDE4DIP isoform 13/MMG8/SMYLE; this interaction is required for its recruitment to the Golgi apparatus. In terms of tissue distribution, predominantly expressed in brain and muscle.

The protein localises to the cytoplasm. It localises to the cytoskeleton. Functionally, plus-end tracking protein (+TIP) that binds to the plus-end of microtubules and regulates the dynamics of the microtubule cytoskeleton. Promotes microtubule growth. May be involved in spindle function by stabilizing microtubules and anchoring them at centrosomes. Also acts as a regulator of minus-end microtubule organization: interacts with the complex formed by AKAP9 and PDE4DIP, leading to recruit CAMSAP2 to the Golgi apparatus, thereby tethering non-centrosomal minus-end microtubules to the Golgi, an important step for polarized cell movement. Promotes elongation of CAMSAP2-decorated microtubule stretches on the minus-end of microtubules. In Homo sapiens (Human), this protein is Microtubule-associated protein RP/EB family member 3 (MAPRE3).